Reading from the N-terminus, the 548-residue chain is MAKELRFGDDARLQMLAGVNALADAVQVTMGPRGRNVVLEKSYGAPTVTKDGVSVAKEIEFEHRFMNMGAQMVKEVASKTSDTAGDGTTTATVLARSILVEGHKAVAAGMNPMDLKRGIDKAVLAVTKKLQAMSKPCKDSKAIAQVGTISANSDEAIGAIIAEAMEKVGKEGVITVEDGNGLENELSVVEGMQFDRGYISPYFINNQQNMSCELEHPFILLVDKKVSSIREMLSVLEGVAKSGRPLLIIAEDVEGEALATLVVNNMRGIVKVCAVKAPGFGDRRKAMLQDIAILTKGQVISEEIGKSLEGATLEDLGSAKRIVVTKENTTIIDGEGKATEINARIAQIRAQMEETTSDYDREKLQERVAKLAGGVAVIKVGAATEVEMKEKKARVEDALHATRAAVEEGIVAGGGVALIRAQKALDSLKGDNDDQNMGINILRRAIESPMRQIVTNAGYEASVVVNKVAEHKDNYGFNAATGEYGDMVEMGILDPTKVTRMALQNAASVASLMLTTECMVADLPKKEEGVGAGDMGGMGGMGGMGGMM.

Residues 29-32 (TMGP), Lys50, 86-90 (DGTTT), Gly414, 478-480 (NAA), and Asp494 contribute to the ATP site.

This sequence belongs to the chaperonin (HSP60) family. As to quaternary structure, forms a cylinder of 14 subunits composed of two heptameric rings stacked back-to-back. Interacts with the co-chaperonin GroES.

Its subcellular location is the cytoplasm. It catalyses the reaction ATP + H2O + a folded polypeptide = ADP + phosphate + an unfolded polypeptide.. In terms of biological role, together with its co-chaperonin GroES, plays an essential role in assisting protein folding. The GroEL-GroES system forms a nano-cage that allows encapsulation of the non-native substrate proteins and provides a physical environment optimized to promote and accelerate protein folding. The polypeptide is Chaperonin GroEL (Legionella pneumophila (strain Paris)).